The sequence spans 282 residues: NAD-dependent protein deacetylase 1 (282 aa).

The Deacetylase sirtuin-type domain maps to 1 to 282 (MTVGRAESPE…ADELSPLPTH (282 aa)). NAD(+) is bound by residues 25–45 (GAGI…SPPS) and 101–104 (QNVD). The active-site Proton acceptor is the His119. Positions 127, 130, 181, and 184 each coordinate Zn(2+). NAD(+) is bound by residues 221-223 (GSS), 247-249 (NRG), and Cys265.

This sequence belongs to the sirtuin family. Class II subfamily. It depends on Zn(2+) as a cofactor.

Its subcellular location is the cytoplasm. It carries out the reaction N(6)-acetyl-L-lysyl-[protein] + NAD(+) + H2O = 2''-O-acetyl-ADP-D-ribose + nicotinamide + L-lysyl-[protein]. Functionally, NAD-dependent protein deacetylase which modulates the activities of several enzymes which are inactive in their acetylated form. The polypeptide is NAD-dependent protein deacetylase 1 (Mycobacterium avium (strain 104)).